The chain runs to 226 residues: 2-C-methyl-D-erythritol 4-phosphate cytidylyltransferase (226 aa).

Belongs to the IspD/TarI cytidylyltransferase family. IspD subfamily.

The enzyme catalyses 2-C-methyl-D-erythritol 4-phosphate + CTP + H(+) = 4-CDP-2-C-methyl-D-erythritol + diphosphate. It functions in the pathway isoprenoid biosynthesis; isopentenyl diphosphate biosynthesis via DXP pathway; isopentenyl diphosphate from 1-deoxy-D-xylulose 5-phosphate: step 2/6. In terms of biological role, catalyzes the formation of 4-diphosphocytidyl-2-C-methyl-D-erythritol from CTP and 2-C-methyl-D-erythritol 4-phosphate (MEP). This is 2-C-methyl-D-erythritol 4-phosphate cytidylyltransferase from Bacillus cereus (strain ATCC 14579 / DSM 31 / CCUG 7414 / JCM 2152 / NBRC 15305 / NCIMB 9373 / NCTC 2599 / NRRL B-3711).